The primary structure comprises 563 residues: 4-hydroxy-7-methoxy-3-oxo-3,4-dihydro-2H-1,4-benzoxazin-2-yl glucoside beta-D-glucosidase 2, chloroplastic (563 aa).

The N-terminal 51 residues, 1–51 (MAPLLAAAMNHAAHPVLRSHLGPNNESFSRHHLSSSPQSSKRRFNLSFTPR), are a transit peptide targeting the chloroplast. Residues 17 to 43 (LRSHLGPNNESFSRHHLSSSPQSSKRR) form a disordered region. Residues Gln89, His193, and 241-242 (NE) each bind a beta-D-glucoside. The Proton donor role is filled by Glu242. Cys261 and Cys267 are disulfide-bonded. Residues 322-358 (SFLDEQAKERSMDINLGWFLEPVVRGDYPFSMRSLAR) are dimerization. Tyr384 lines the a beta-D-glucoside pocket. 2 dimerization regions span residues 391-402 (HIDISPKYSPVL) and 447-450 (KYGN). Residues Glu457, Trp508, 515-516 (EW), and Tyr524 contribute to the a beta-D-glucoside site. Glu457 serves as the catalytic Nucleophile.

The protein belongs to the glycosyl hydrolase 1 family. In terms of assembly, homo- and heterodimer. In terms of tissue distribution, expressed in leaves only starting at day 6 after germination.

It localises to the plastid. The protein resides in the chloroplast. The enzyme catalyses Hydrolysis of terminal, non-reducing beta-D-glucosyl residues with release of beta-D-glucose.. The catalysed reaction is DIMBOA beta-D-glucoside + H2O = DIMBOA + D-glucose. It carries out the reaction DIBOA beta-D-glucoside + H2O = DIBOA + D-glucose. Functionally, beta-glucosidase acting poorly on artificial aryl beta-glucosides. Has no activity toward the chromogenic substrate 6-bromo-2-naphthyl-beta-D-glucoside (6BNGlc). This is 4-hydroxy-7-methoxy-3-oxo-3,4-dihydro-2H-1,4-benzoxazin-2-yl glucoside beta-D-glucosidase 2, chloroplastic (GLU2) from Zea mays (Maize).